Reading from the N-terminus, the 325-residue chain is Elongation factor Ts, mitochondrial (325 aa).

Residues 1 to 45 (MSLLRSLRVFLVARTGSYPAGSLLRQSPQPRHTFYAGPRLSASAS) constitute a mitochondrion transit peptide. N6-succinyllysine occurs at positions 76, 133, and 192. S270 is modified (phosphoserine). At T324 the chain carries Phosphothreonine.

Belongs to the EF-Ts family. Expressed in all tissues, with the highest levels of expression in skeletal muscle, liver and kidney.

The protein localises to the mitochondrion. Functionally, associates with the EF-Tu.GDP complex and induces the exchange of GDP to GTP. It remains bound to the aminoacyl-tRNA.EF-Tu.GTP complex up to the GTP hydrolysis stage on the ribosome. In Homo sapiens (Human), this protein is Elongation factor Ts, mitochondrial.